The chain runs to 572 residues: Proline--tRNA ligase (572 aa).

The protein belongs to the class-II aminoacyl-tRNA synthetase family. ProS type 1 subfamily. Homodimer.

It localises to the cytoplasm. The catalysed reaction is tRNA(Pro) + L-proline + ATP = L-prolyl-tRNA(Pro) + AMP + diphosphate. In terms of biological role, catalyzes the attachment of proline to tRNA(Pro) in a two-step reaction: proline is first activated by ATP to form Pro-AMP and then transferred to the acceptor end of tRNA(Pro). As ProRS can inadvertently accommodate and process non-cognate amino acids such as alanine and cysteine, to avoid such errors it has two additional distinct editing activities against alanine. One activity is designated as 'pretransfer' editing and involves the tRNA(Pro)-independent hydrolysis of activated Ala-AMP. The other activity is designated 'posttransfer' editing and involves deacylation of mischarged Ala-tRNA(Pro). The misacylated Cys-tRNA(Pro) is not edited by ProRS. The protein is Proline--tRNA ligase of Escherichia coli O127:H6 (strain E2348/69 / EPEC).